We begin with the raw amino-acid sequence, 210 residues long: Thymidylate kinase (210 aa).

Position 10–17 (10–17 (GPEGAGKS)) interacts with ATP.

It belongs to the thymidylate kinase family.

It carries out the reaction dTMP + ATP = dTDP + ADP. Phosphorylation of dTMP to form dTDP in both de novo and salvage pathways of dTTP synthesis. The polypeptide is Thymidylate kinase (Pseudomonas entomophila (strain L48)).